A 393-amino-acid polypeptide reads, in one-letter code: Serine/threonine protein kinase AFUB_078980 (393 aa).

Positions 61-390 constitute a Protein kinase domain; the sequence is YQVLSKLGFG…APELLTDPWL (330 aa). ATP contacts are provided by residues 67-75 and Lys90; that span reads LGFGANSTV. Residue Asp190 is the Proton acceptor of the active site.

The protein belongs to the protein kinase superfamily. CMGC Ser/Thr protein kinase family.

It catalyses the reaction L-seryl-[protein] + ATP = O-phospho-L-seryl-[protein] + ADP + H(+). The enzyme catalyses L-threonyl-[protein] + ATP = O-phospho-L-threonyl-[protein] + ADP + H(+). Serine/threonine protein kinase; part of the subtelomeric hrmA-associated cluster (HAC) containing genes that alter the hyphal surface (such as reduced total chitin or increased beta-glucan exposure) and perturb inter-hyphal interactions within the developing biofilms, resulting in a loss of vertically aligned polarized growing filaments. Consequently, this hypoxia-typic morphotype (called H-MORPH) with altered biofilm architecture leads to increased hypoxia fitness, increased host inflammation, rapid disease progression, and mortality in a murine model of invasive aspergillosis. In Aspergillus fumigatus (strain CBS 144.89 / FGSC A1163 / CEA10) (Neosartorya fumigata), this protein is Serine/threonine protein kinase AFUB_078980.